The chain runs to 458 residues: Retinoic acid receptor RXR-beta (458 aa).

Positions 1–17 are enriched in basic and acidic residues; the sequence is GEAGRDGMGDTGRDSRS. Residues 1–105 form a disordered region; that stretch reads GEAGRDGMGD…GGSGPPEDVK (105 aa). The segment at 1-129 is modulating; sequence GEAGRDGMGD…PGGPGAGKRL (129 aa). A compositionally biased stretch (low complexity) spans 18-31; the sequence is PDSSSPNPLSQGIP. Over residues 32–56 the composition is skewed to pro residues; that stretch reads PSSPPGPPHTPSAPPPPMPPPPLGS. A compositionally biased stretch (low complexity) spans 57 to 68; that stretch reads PFPVISSSMGSP. A compositionally biased stretch (pro residues) spans 69 to 78; it reads GLPPPAPPGF. 2 consecutive NR C4-type zinc fingers follow at residues 130 to 150 and 166 to 190; these read CAIC…CEGC and CRDN…YQKC. The nuclear receptor DNA-binding region spans 130–195; the sequence is CAICGDRSSG…RYQKCLATGM (66 aa). Residues 196–220 form a hinge region; the sequence is KREAVQEERQRGKDKDGDGDGAGGA. Residues 201–213 show a composition bias toward basic and acidic residues; the sequence is QEERQRGKDKDGD. 2 disordered regions span residues 201–223 and 238–261; these read QEER…APEE and QKSD…NDPV. An NR LBD domain is found at 221–454; it reads PEEMPVDRIL…TFLMEMLEAP (234 aa). The segment covering 245 to 255 has biased composition (gly residues); it reads EGPGATGGGGS.

It belongs to the nuclear hormone receptor family. NR2 subfamily. In terms of assembly, homodimer (in vitro). Heterodimer with other retinoic acid receptor family members. Binds DNA preferentially as a RAR/RXR heterodimer. Interacts with NR1H3. Interacts with AKAP13. As to expression, expressed in the adrenal gland with main expression in the zona fasciculata (at protein level).

It localises to the nucleus. The protein localises to the cytoplasm. In terms of biological role, receptor for retinoic acid. Retinoic acid receptors bind as heterodimers to their target response elements in response to their ligands, all-trans or 9-cis retinoic acid, and regulate gene expression in various biological processes. The RAR/RXR heterodimers bind to the retinoic acid response elements (RARE). The protein is Retinoic acid receptor RXR-beta (Rxrb) of Rattus norvegicus (Rat).